A 480-amino-acid polypeptide reads, in one-letter code: Proline--tRNA ligase (480 aa).

Belongs to the class-II aminoacyl-tRNA synthetase family. ProS type 3 subfamily. As to quaternary structure, homodimer.

The protein localises to the cytoplasm. It catalyses the reaction tRNA(Pro) + L-proline + ATP = L-prolyl-tRNA(Pro) + AMP + diphosphate. Its function is as follows. Catalyzes the attachment of proline to tRNA(Pro) in a two-step reaction: proline is first activated by ATP to form Pro-AMP and then transferred to the acceptor end of tRNA(Pro). The sequence is that of Proline--tRNA ligase from Metallosphaera sedula (strain ATCC 51363 / DSM 5348 / JCM 9185 / NBRC 15509 / TH2).